A 374-amino-acid chain; its full sequence is D-amino-acid oxidase 3 (374 aa).

Positions 1 to 19 are cleaved as a signal peptide; that stretch reads MVKYDAIILGSGVLGLSIA. Residues serine 11, leucine 14, lysine 34, aspartate 35, alanine 46, serine 47, and glycine 51 each contribute to the FAD site. A glycan (N-linked (GlcNAc...) asparagine) is linked at asparagine 180. Cysteine 214 and cysteine 271 are disulfide-bonded. Positions 229, 246, and 296 each coordinate (R)-lactate. Anthranilate contacts are provided by tyrosine 229, tyrosine 246, and arginine 296. FAD is bound by residues arginine 296, glycine 342, glycine 345, tyrosine 346, and glutamine 347. Positions 372–374 match the Microbody targeting signal motif; sequence AKL.

This sequence belongs to the DAMOX/DASOX family. FAD is required as a cofactor.

It localises to the peroxisome matrix. The catalysed reaction is a D-alpha-amino acid + O2 + H2O = a 2-oxocarboxylate + H2O2 + NH4(+). Functionally, catalyzes the oxidative deamination of D-amino acids with broad substrate specificity. Enables the organism to utilize D-amino acids as a source of nutrients. Enables the organism to utilize D-asparate and D-glutamate as a nitrogen source and may also contribute to utlization of D-tryptophan, D-tyrosine and D-asparagine as a nitrogen source. Protects the organism from the toxicity of D-amino acids, including from D-glutamate. May play a role in its interaction with the host. The sequence is that of D-amino-acid oxidase 3 from Cryptococcus deuterogattii (strain R265) (Cryptococcus gattii VGII (strain R265)).